Consider the following 118-residue polypeptide: Putative pterin-4-alpha-carbinolamine dehydratase (118 aa).

Belongs to the pterin-4-alpha-carbinolamine dehydratase family.

It catalyses the reaction (4aS,6R)-4a-hydroxy-L-erythro-5,6,7,8-tetrahydrobiopterin = (6R)-L-erythro-6,7-dihydrobiopterin + H2O. In Pseudomonas entomophila (strain L48), this protein is Putative pterin-4-alpha-carbinolamine dehydratase.